The sequence spans 1430 residues: Caskin-1 (1430 aa).

ANK repeat units follow at residues 48-77 (DGFS…AVDI), 81-110 (KGMR…AVNV), 114-143 (EGHI…NPCI), 147-176 (SGKT…CAAL), 188-217 (NGTS…DINR), and 220-249 (KSGT…NAQV). A Phosphotyrosine modification is found at tyrosine 253. An SH3 domain is found at 281–347 (SAALQVRATK…PSSLGEAIVK (67 aa)). The disordered stretch occupies residues 348–372 (RAGSRTGSEPSPPQGGGSLGPSAPP). Serine 358 is modified (phosphoserine). The tract at residues 375-471 (IWVLRKPFAG…PKKLESSSAS (97 aa)) is CASK-binding. The residue at position 398 (arginine 398) is an Omega-N-methylarginine. Positions 421–430 (QKSVSESSPG) are enriched in polar residues. The interval 421–472 (QKSVSESSPGDSPVKPPEGSSGAARSQPPAAHAGQVYGEQPPKKLESSSASE) is disordered. Serine 423 and serine 432 each carry phosphoserine. 2 consecutive SAM domains span residues 474–537 (KSAE…LNIP) and 543–607 (HKPA…LAEL). Phosphoserine occurs at positions 635 and 648. The span at 667–679 (LSGPAEAGAAAAE) shows a compositional bias: low complexity. Disordered regions lie at residues 667-1001 (LSGP…SAGS), 1015-1040 (GGGG…DPGR), 1055-1371 (GPDG…RQKL), and 1388-1407 (KIRQ…EKST). Over residues 683 to 711 (NHLPATPRTTSRQESSLSGRARHMSSSQE) the composition is skewed to polar residues. Residues serine 722 and serine 727 each carry the phosphoserine modification. At threonine 740 the chain carries Phosphothreonine. Serine 790 carries the phosphoserine modification. A compositionally biased stretch (pro residues) spans 847–859 (PPAPGPVPPPVPA). A phosphoserine mark is found at serine 890, serine 892, and serine 988. A compositionally biased stretch (pro residues) spans 1027-1036 (GHPTPRPASP). Threonine 1066 is modified (phosphothreonine). At serine 1068 the chain carries Phosphoserine. Residues 1147–1159 (DTVKRRPKAKEPD) are compositionally biased toward basic and acidic residues. Pro residues predominate over residues 1190 to 1214 (PELPPPPPPAEPPPTDLMPLPPLPL). Phosphoserine is present on serine 1258. Position 1267 is a phosphothreonine (threonine 1267). Residues 1267 to 1282 (TPPPVSPKPPPPPTAP) are compositionally biased toward pro residues. 3 stretches are compositionally biased toward low complexity: residues 1283–1298 (KPAK…SATP), 1308–1326 (PPAA…SASP), and 1344–1358 (PRAA…PVAS). Serine 1362 carries the post-translational modification Phosphoserine. The segment covering 1388–1406 (KIRQEDGQGPRPSSIEEKS) has biased composition (basic and acidic residues).

Polymerizes, via the tandem SAM domains, to form long, 8 nM wide fibers, upon which other proteins can assemble. Binds the CaM kinase domain of CASK. Forms a ternary complex with CASK and LIN7A, LIN7B or LIN7C. Competes with APBA1 that forms a similar complex with CASK and LIN7 proteins. The tripartite complex CASKIN1/CASK/LIN7(A/B/C) binds the cytoplasmic tail of NRXN1. In terms of tissue distribution, expressed in brain. Localized primarily to the neuropil and enriched in synaptic areas (at protein level).

The protein localises to the cytoplasm. May link the scaffolding protein CASK to downstream intracellular effectors. The sequence is that of Caskin-1 (Caskin1) from Rattus norvegicus (Rat).